The sequence spans 225 residues: UPF0758 protein Sez_1052 (225 aa).

The 123-residue stretch at 102 to 224 (PVLSSAQVAE…YYSFREKSDL (123 aa)) folds into the MPN domain. Zn(2+) is bound by residues His173, His175, and Asp186. The short motif at 173–186 (HNHPSGLTKPSAND) is the JAMM motif element.

The protein belongs to the UPF0758 family.

This is UPF0758 protein Sez_1052 from Streptococcus equi subsp. zooepidemicus (strain MGCS10565).